Reading from the N-terminus, the 105-residue chain is Putative regulatory protein COPRO5265_1186 (105 aa).

Residues 76 to 105 are disordered; that stretch reads RLEEEEEEEERTEPITEQEAELEEESGEDV. Residues 78-105 show a composition bias toward acidic residues; that stretch reads EEEEEEEERTEPITEQEAELEEESGEDV.

The protein belongs to the RemA family.

The protein is Putative regulatory protein COPRO5265_1186 of Coprothermobacter proteolyticus (strain ATCC 35245 / DSM 5265 / OCM 4 / BT).